The primary structure comprises 98 residues: NADH-ubiquinone oxidoreductase chain 4L (98 aa).

The next 3 helical transmembrane spans lie at 1-21, 29-49, and 61-81; these read MSLV…GLLM, ALLC…LTIL, and IILL…LIMI.

It belongs to the complex I subunit 4L family. In terms of assembly, core subunit of respiratory chain NADH dehydrogenase (Complex I) which is composed of 45 different subunits.

It is found in the mitochondrion inner membrane. The catalysed reaction is a ubiquinone + NADH + 5 H(+)(in) = a ubiquinol + NAD(+) + 4 H(+)(out). In terms of biological role, core subunit of the mitochondrial membrane respiratory chain NADH dehydrogenase (Complex I) which catalyzes electron transfer from NADH through the respiratory chain, using ubiquinone as an electron acceptor. Part of the enzyme membrane arm which is embedded in the lipid bilayer and involved in proton translocation. The polypeptide is NADH-ubiquinone oxidoreductase chain 4L (MT-ND4L) (Monodon monoceros (Narwhal)).